The primary structure comprises 349 residues: Ion-translocating oxidoreductase complex subunit D (349 aa).

Transmembrane regions (helical) follow at residues valine 20 to glycine 42, serine 77 to valine 99, and alanine 124 to alanine 144. An FMN phosphoryl threonine modification is found at threonine 185. 5 consecutive transmembrane segments (helical) span residues serine 212 to leucine 232, tryptophan 239 to leucine 259, alanine 265 to threonine 285, alanine 291 to isoleucine 311, and glycine 315 to isoleucine 335.

The protein belongs to the NqrB/RnfD family. In terms of assembly, the complex is composed of six subunits: RnfA, RnfB, RnfC, RnfD, RnfE and RnfG. The cofactor is FMN.

The protein resides in the cell inner membrane. Its function is as follows. Part of a membrane-bound complex that couples electron transfer with translocation of ions across the membrane. The polypeptide is Ion-translocating oxidoreductase complex subunit D (Shewanella baltica (strain OS185)).